The sequence spans 495 residues: Probable serine/threonine-protein kinase DDB_G0292354 (495 aa).

The region spanning 16–275 is the Protein kinase domain; that stretch reads WTVVKKIGQG…PNYVFLQTLL (260 aa). ATP is bound by residues 22–30 and Lys45; that span reads IGQGAFGEI. Residue Asp136 is the Proton acceptor of the active site. The disordered stretch occupies residues 293–469; the sequence is EVQTNSGASS…NGNGSNSQPI (177 aa). 2 stretches are compositionally biased toward low complexity: residues 295 to 333 and 354 to 364; these read QTNS…NSSA and NNSNNNNNNNN. Over residues 385 to 395 the composition is skewed to polar residues; that stretch reads ESNSQIANSSE. Residues 435-466 show a composition bias toward low complexity; sequence SNNNNINNNNNNYNNNNNNNNNSHMNGNGSNS.

Belongs to the protein kinase superfamily. CK1 Ser/Thr protein kinase family.

The polypeptide is Probable serine/threonine-protein kinase DDB_G0292354 (Dictyostelium discoideum (Social amoeba)).